Reading from the N-terminus, the 196-residue chain is Phosphoheptose isomerase (196 aa).

Residues 34 to 193 form the SIS domain; it reads LIETFKIGNK…EQGLFGIFAG (160 aa). 49-51 lines the substrate pocket; sequence NGG. The Zn(2+) site is built by H58 and E62. Residues E62, 91-92, 117-119, S122, and Q169 contribute to the substrate site; these read ND and STS. The Zn(2+) site is built by Q169 and H177.

Belongs to the SIS family. GmhA subfamily. Homotetramer. The cofactor is Zn(2+).

The protein resides in the cytoplasm. The catalysed reaction is 2 D-sedoheptulose 7-phosphate = D-glycero-alpha-D-manno-heptose 7-phosphate + D-glycero-beta-D-manno-heptose 7-phosphate. The protein operates within carbohydrate biosynthesis; D-glycero-D-manno-heptose 7-phosphate biosynthesis; D-glycero-alpha-D-manno-heptose 7-phosphate and D-glycero-beta-D-manno-heptose 7-phosphate from sedoheptulose 7-phosphate: step 1/1. Functionally, catalyzes the isomerization of sedoheptulose 7-phosphate in D-glycero-D-manno-heptose 7-phosphate. In Trichlorobacter lovleyi (strain ATCC BAA-1151 / DSM 17278 / SZ) (Geobacter lovleyi), this protein is Phosphoheptose isomerase.